The chain runs to 196 residues: SAGA-associated factor 11 homolog (196 aa).

Positions 1-22 (MSAANMPTTTGAQGSGNQVPTT) are disordered. The SGF11-type zinc-finger motif lies at 106 to 127 (CTCPNCDRLVAAARFAPHLEKC). The segment at 144 to 196 (TKEGASSAHLHSAGNAGGTDDEDDVDWSSDKRRKKSNQNSRNNGSKKNNGKTF) is disordered. Ser-172 is subject to Phosphoserine. The segment covering 180–196 (NQNSRNNGSKKNNGKTF) has biased composition (low complexity).

The protein belongs to the SGF11 family. Component of some SAGA transcription coactivator-HAT complexes, at least composed of Ada2b, not/nonstop, Pcaf/Gcn5, Sgf11 and Spt3. Within the SAGA complex, Sgf11, e(y)2, and not/nonstop form an additional subcomplex of SAGA called the DUB module (deubiquitination module). Interacts directly with not/nonstop. Interacts with the AMEX complex component xmas-2. Interacts with Cbp80; important for promoter recruitment of Sgf11 that is not associated with the DUB module.

It is found in the nucleus. The protein resides in the nucleoplasm. Its subcellular location is the cytoplasm. In terms of biological role, component of the transcription regulatory histone acetylation (HAT) complex SAGA, a multiprotein complex that activates transcription by remodeling chromatin and mediating histone acetylation and deubiquitination. Within the SAGA complex, participates in a subcomplex that specifically deubiquitinates histone H2B. The SAGA complex is recruited to specific gene promoters by activators, where it is required for transcription. Required for nuclear receptor-mediated transactivation. Binds independently on SAGA to promoters in an RNA-dependent manner. Binds to mRNA and is essential for total mRNA export from the nucleus. Required to counteract heterochromatin silencing. Controls the development of neuronal connectivity in visual system by being required for accurate axon targeting in the optic lobe. Required for expression of ecdysone-induced genes such as br/broad. The polypeptide is SAGA-associated factor 11 homolog (Drosophila yakuba (Fruit fly)).